A 283-amino-acid polypeptide reads, in one-letter code: Lolitrem B biosynthesis cluster protein S (283 aa).

The first 27 residues, 1–27, serve as a signal peptide directing secretion; it reads MSRSDWIFISLQGFFCLAGVIWKSREG. Helical transmembrane passes span 73–93, 112–132, 157–177, 219–239, and 250–270; these read WFWLHLMLYIAQLVGLILIIL, LGYLSYTVGLSTAFPVFSLWI, IFWCTGISHIGIFMVAIVATL, MTGTSSGFFLTVGLFSQALEA, and VRMFFVSLIAGPAAGSADVLL.

It belongs to the ltmS family.

Its subcellular location is the membrane. Part of the gene cluster that mediates the biosynthesis of lolitrems, indole-diterpene mycotoxins that are potent tremorgens in mammals, and are synthesized by clavicipitaceous fungal endophytes in association with their grass hosts. The geranylgeranyl diphosphate (GGPP) synthase ltmG is proposed to catalyze the first step in lolitrem biosynthesis. LtmG catalyzes a series of iterative condensations of isopentenyl diphosphate (IPP) with dimethylallyl diphosphate (DMAPP), geranyl diphosphate (GPP), and farnesyl diphosphate (FPP), to form GGPP. GGPP then condenses with indole-3-glycerol phosphate to form 3-geranylgeranylindole, an acyclic intermediate, to be incorporated into paxilline. Either ltmG or ltmC could be responsible for this step, as both are putative prenyl transferases. The FAD-dependent monooxygenase ltmM then catalyzes the epoxidation of the two terminal alkenes of the geranylgeranyl moiety, which is subsequently cyclized by ltmB, to paspaline. The cytochrome P450 monooxygenases ltmQ and ltmP can sequentially oxidize paspaline to terpendole E and terpendole F. Alternatively, ltmP converts paspaline to an intermediate which is oxidized by ltmQ to terpendole F. LtmF, ltmK, ltmE and ltmJ appear to be unique to the epichloe endophytes. The prenyltransferase ltmF is involved in the 27-hydroxyl-O-prenylation. The cytochrome P450 monooxygenase ltmK is required for the oxidative acetal ring formation. The multi-functional prenyltransferase ltmE is required for C20- and C21-prenylations of the indole ring of paspalanes and acts together with the cytochrome P450 monooxygenase ltmJ to yield lolitremanes by multiple oxidations and ring closures. The stereoisomer pairs of lolitriol and lolitrem N or lolitrem B and lolitrem F may be attributed to variations in the way in which ring closure can occur under the action of ltmJ. While the major product of this pathway is lolitrem B, the prenyl transferases and cytochrome P450 monooxygenases identified in this pathway have a remarkable versatility in their regio- and stereo-specificities to generate a diverse range of metabolites that are products of a metabolic grid rather than a linear pathway. The protein is Lolitrem B biosynthesis cluster protein S of Epichloe festucae (strain Fl1).